The chain runs to 97 residues: Probable lipopolysaccharide assembly protein A (97 aa).

The next 2 helical transmembrane spans lie at 1–21 and 46–66; these read MIKYILGIVIFIAIVLVAITI and VAILFGLGLILGWLITAFFYI. Positions 67-95 form a coiled coil; the sequence is KLKLKNMALARQVKRQTLQINELTTTRDK.

It belongs to the LapA family.

The protein localises to the cell inner membrane. Involved in the assembly of lipopolysaccharide (LPS). In Haemophilus influenzae (strain ATCC 51907 / DSM 11121 / KW20 / Rd), this protein is Probable lipopolysaccharide assembly protein A.